The following is a 317-amino-acid chain: Mitochondrial outer membrane protein porin 4 (317 aa).

The segment at 1-30 is disordered; that stretch reads MEAETECKVPGVYSETGIPVEDPAPGLNSD.

Belongs to the eukaryotic mitochondrial porin (TC 1.B.8.1) family.

It localises to the mitochondrion outer membrane. Forms a channel through the mitochondrial outer membrane that allows diffusion of small hydrophilic molecules. The channel adopts an open conformation at low or zero membrane potential and a closed conformation at potentials above 30-40 mV. The open state has a weak anion selectivity whereas the closed state is cation-selective. This is Mitochondrial outer membrane protein porin 4 (VDAC4) from Oryza sativa subsp. japonica (Rice).